The sequence spans 896 residues: Phosphatidate phosphatase LPIN2 (896 aa).

The tract at residues 1–108 is N-LIP; the sequence is MNYVGQLAGQ…LPAYLATSPI (108 aa). Position 106 is a phosphoserine (serine 106). Residues 120 to 208 form a disordered region; sequence TPLVKSGGDE…SSNASLKEEE (89 aa). The span at 152–162 shows a compositional bias: basic residues; it reads VKKKKRRRKKY. The short motif at 153-158 is the Nuclear localization signal element; sequence KKKKRR. Phosphoserine is present on residues serine 174, serine 186, serine 187, serine 243, and serine 303. Disordered regions lie at residues 370-405 and 420-459; these read AEAP…DIYL and FPKS…TECL. The segment covering 387–396 has biased composition (basic residues); the sequence is KKKGVHKRSQ. Residues 426–448 are compositionally biased toward polar residues; that stretch reads EPGSRQWPESDTLSGSQSPQSVG. At serine 566 the chain carries Phosphoserine. Residues 569–579 are compositionally biased toward basic and acidic residues; the sequence is KQLPESKEGKS. The tract at residues 569–636 is disordered; the sequence is KQLPESKEGK…LSHGSTTSYK (68 aa). Positions 604–617 are enriched in acidic residues; the sequence is SSSDEGSQELEESI. The segment at 635–837 is C-LIP; the sequence is YKKSLRLSSD…RIFTVNPKGE (203 aa). Positions 689-693 match the DXDXT motif motif; it reads DIDGT. Positions 700–704 match the LXXIL motif motif; that stretch reads LGQIL.

This sequence belongs to the lipin family. Requires Mg(2+) as cofactor. As to expression, expressed in liver, lung, kidney, placenta, spleen, thymus, lymph node, prostate, testes, small intestine, and colon.

It localises to the nucleus. The protein resides in the cytoplasm. Its subcellular location is the cytosol. It is found in the endoplasmic reticulum membrane. It carries out the reaction a 1,2-diacyl-sn-glycero-3-phosphate + H2O = a 1,2-diacyl-sn-glycerol + phosphate. With respect to regulation, inhibited by N-ethylmaleimide. Functionally, acts as a magnesium-dependent phosphatidate phosphatase enzyme which catalyzes the conversion of phosphatidic acid to diacylglycerol during triglyceride, phosphatidylcholine and phosphatidylethanolamine biosynthesis in the endoplasmic reticulum membrane. Plays important roles in controlling the metabolism of fatty acids at different levels. Also acts as a nuclear transcriptional coactivator for PPARGC1A to modulate lipid metabolism. In Homo sapiens (Human), this protein is Phosphatidate phosphatase LPIN2.